Consider the following 97-residue polypeptide: NADH dehydrogenase [ubiquinone] 1 alpha subcomplex subunit 2 (97 aa).

An intrachain disulfide couples Cys19 to Cys53.

The protein belongs to the complex I NDUFA2 subunit family. As to quaternary structure, complex I is composed of at least 49 different subunits.

The protein localises to the mitochondrion inner membrane. In terms of biological role, accessory subunit of the mitochondrial membrane respiratory chain NADH dehydrogenase (Complex I), that is believed not to be involved in catalysis. Complex I functions in the transfer of electrons from NADH to the respiratory chain. The immediate electron acceptor for the enzyme is believed to be ubiquinone. The polypeptide is NADH dehydrogenase [ubiquinone] 1 alpha subcomplex subunit 2 (Arabidopsis thaliana (Mouse-ear cress)).